We begin with the raw amino-acid sequence, 604 residues long: Membrane protein insertase YidC (604 aa).

The helical transmembrane segment at 8–28 threads the bilayer; the sequence is LYLAIGLSLLVLIGWNYFFAG. Residues 42 to 84 form a disordered region; the sequence is EQQAQTQTTSDTTARSDLNVPGQRSLPGESPQTQLSRPEALAA. Over residues 43–58 the composition is skewed to low complexity; sequence QQAQTQTTSDTTARSD. A run of 5 helical transmembrane segments spans residues 349 to 369, 375 to 395, 449 to 469, 507 to 527, and 546 to 566; these read FDLLIDWGYFYFITRPMFWIL, VVGNFGVAILCITVLVKAVFF, LPMLIQIPVFFALYKVLFVTI, MIGHFLAIGIWPLIMGVSMFF, and WMPVIFTFMLGTFPSGLVIYW.

Belongs to the OXA1/ALB3/YidC family. Type 1 subfamily. As to quaternary structure, interacts with the Sec translocase complex via SecD. Specifically interacts with transmembrane segments of nascent integral membrane proteins during membrane integration.

The protein resides in the cell inner membrane. Its function is as follows. Required for the insertion and/or proper folding and/or complex formation of integral membrane proteins into the membrane. Involved in integration of membrane proteins that insert both dependently and independently of the Sec translocase complex, as well as at least some lipoproteins. Aids folding of multispanning membrane proteins. The polypeptide is Membrane protein insertase YidC (Beijerinckia indica subsp. indica (strain ATCC 9039 / DSM 1715 / NCIMB 8712)).